The chain runs to 356 residues: Serendipity locus protein beta (356 aa).

The segment at 171–193 (IPCHICGEMFSSQEVLERHIKAD) adopts a C2H2-type 1; degenerate zinc-finger fold. 5 C2H2-type zinc fingers span residues 201 to 223 (ATCN…MNLH), 229 to 251 (LECR…MEVH), 257 to 279 (YQCD…LMRH), 286 to 308 (LICE…LRTH), and 315 to 337 (YPCP…KRVH).

As to quaternary structure, binds chromatin; requires N-terminal regions to form protein-protein contacts, in addition to DNA specific recognition by the zinc fingers.

The protein resides in the nucleus. In terms of biological role, binds to the consensus DNA sequence 5'-YCAGAGATGCGCA-3'. The protein is Serendipity locus protein beta (Sry-beta) of Drosophila melanogaster (Fruit fly).